We begin with the raw amino-acid sequence, 105 residues long: Small ribosomal subunit protein uS10 (105 aa).

This sequence belongs to the universal ribosomal protein uS10 family. As to quaternary structure, part of the 30S ribosomal subunit.

Functionally, involved in the binding of tRNA to the ribosomes. This chain is Small ribosomal subunit protein uS10, found in Chlamydia pneumoniae (Chlamydophila pneumoniae).